Reading from the N-terminus, the 101-residue chain is Large ribosomal subunit protein eL21 (101 aa).

Residues 1–18 (MVKHSRGYRTRSRSLLRK) are compositionally biased toward basic residues. A disordered region spans residues 1–23 (MVKHSRGYRTRSRSLLRKSPRER).

Belongs to the eukaryotic ribosomal protein eL21 family.

The chain is Large ribosomal subunit protein eL21 from Saccharolobus islandicus (strain Y.N.15.51 / Yellowstone #2) (Sulfolobus islandicus).